Consider the following 185-residue polypeptide: Cuticle protein 18.6, isoform B (185 aa).

6 consecutive repeat copies span residues 21-24 (AAPA), 33-36 (AAPV), 41-44 (AAPV), 133-136 (AAPV), 139-142 (AAPV), and 150-153 (AAPV). In terms of domain architecture, Chitin-binding type R&amp;R spans 64-134 (HPQYSFAYNV…KEAGAHPAAA (71 aa)).

Its function is as follows. Component of the cuticle of migratory locust which contains more than 100 different structural proteins. This chain is Cuticle protein 18.6, isoform B, found in Locusta migratoria (Migratory locust).